Here is a 211-residue protein sequence, read N- to C-terminus: Putative transposase for insertion sequence element IS402 (211 aa).

The interval 51–71 (RRWGRPKTGPNPTDRARPGSK) is disordered.

The protein belongs to the transposase 11 family.

In terms of biological role, involved in the transposition of the insertion sequence. This chain is Putative transposase for insertion sequence element IS402, found in Burkholderia cepacia (Pseudomonas cepacia).